We begin with the raw amino-acid sequence, 698 residues long: Probable threonine--tRNA ligase 2, cytoplasmic (698 aa).

The TGS domain maps to 38–100; it reads GGGNIKLNDG…EMSGKDYNIE (63 aa). A disordered region spans residues 541 to 560; it reads NNNNNNNNNNEEINDNNNNN.

It belongs to the class-II aminoacyl-tRNA synthetase family.

It is found in the cytoplasm. It carries out the reaction tRNA(Thr) + L-threonine + ATP = L-threonyl-tRNA(Thr) + AMP + diphosphate + H(+). In Dictyostelium discoideum (Social amoeba), this protein is Probable threonine--tRNA ligase 2, cytoplasmic (thrS2).